The primary structure comprises 123 residues: Ribonuclease P protein component (123 aa).

The protein belongs to the RnpA family. Consists of a catalytic RNA component (M1 or rnpB) and a protein subunit.

The catalysed reaction is Endonucleolytic cleavage of RNA, removing 5'-extranucleotides from tRNA precursor.. Functionally, RNaseP catalyzes the removal of the 5'-leader sequence from pre-tRNA to produce the mature 5'-terminus. It can also cleave other RNA substrates such as 4.5S RNA. The protein component plays an auxiliary but essential role in vivo by binding to the 5'-leader sequence and broadening the substrate specificity of the ribozyme. This is Ribonuclease P protein component from Streptococcus pneumoniae serotype 4 (strain ATCC BAA-334 / TIGR4).